Consider the following 247-residue polypeptide: NADH-ubiquinone oxidoreductase chain 6 (247 aa).

5 helical membrane-spanning segments follow: residues 18 to 38, 44 to 64, 70 to 90, 104 to 124, and 168 to 188; these read TMIL…VVRA, SVLF…LLGL, ISPV…VMMF, YLPV…FILD, and VWFL…IVLT.

It belongs to the complex I subunit 6 family.

The protein localises to the mitochondrion membrane. The catalysed reaction is a ubiquinone + NADH + 5 H(+)(in) = a ubiquinol + NAD(+) + 4 H(+)(out). Functionally, core subunit of the mitochondrial membrane respiratory chain NADH dehydrogenase (Complex I) that is believed to belong to the minimal assembly required for catalysis. Complex I functions in the transfer of electrons from NADH to the respiratory chain. The immediate electron acceptor for the enzyme is believed to be ubiquinone. The chain is NADH-ubiquinone oxidoreductase chain 6 (ND6) from Triticum aestivum (Wheat).